We begin with the raw amino-acid sequence, 308 residues long: Oxygen-dependent coproporphyrinogen-III oxidase (308 aa).

Ser-100 provides a ligand contact to substrate. Residues His-104 and His-114 each contribute to the a divalent metal cation site. His-114 functions as the Proton donor in the catalytic mechanism. A substrate-binding site is contributed by 116–118 (NFR). 2 residues coordinate a divalent metal cation: His-153 and His-183. The important for dimerization stretch occupies residues 248-283 (YVEFNLVFDRGTIFGLQSGGRTESILSSMPPMASWR). 266–268 (GGR) is a substrate binding site.

Belongs to the aerobic coproporphyrinogen-III oxidase family. In terms of assembly, homodimer. A divalent metal cation is required as a cofactor.

It localises to the cytoplasm. The catalysed reaction is coproporphyrinogen III + O2 + 2 H(+) = protoporphyrinogen IX + 2 CO2 + 2 H2O. The protein operates within porphyrin-containing compound metabolism; protoporphyrin-IX biosynthesis; protoporphyrinogen-IX from coproporphyrinogen-III (O2 route): step 1/1. Functionally, involved in the heme biosynthesis. Catalyzes the aerobic oxidative decarboxylation of propionate groups of rings A and B of coproporphyrinogen-III to yield the vinyl groups in protoporphyrinogen-IX. The polypeptide is Oxygen-dependent coproporphyrinogen-III oxidase (Francisella tularensis subsp. novicida (strain U112)).